The sequence spans 292 residues: [LysW]-aminoadipate kinase (292 aa).

Residues Arg-89 and Asn-193 each contribute to the substrate site.

This sequence belongs to the acetylglutamate kinase family. LysZ subfamily.

The protein resides in the cytoplasm. It carries out the reaction [amino-group carrier protein]-C-terminal-N-(1,4-dicarboxybutan-1-yl)-L-glutamine + ATP = [amino-group carrier protein]-C-terminal-N-(1-carboxy-5-phosphooxy-5-oxopentan-1-yl)-L-glutamine + ADP. It participates in amino-acid biosynthesis; L-lysine biosynthesis via AAA pathway; L-lysine from L-alpha-aminoadipate (Thermus route): step 2/5. Functionally, catalyzes the phosphorylation of LysW-gamma-alpha-aminoadipate. In Deinococcus radiodurans (strain ATCC 13939 / DSM 20539 / JCM 16871 / CCUG 27074 / LMG 4051 / NBRC 15346 / NCIMB 9279 / VKM B-1422 / R1), this protein is [LysW]-aminoadipate kinase.